The chain runs to 526 residues: Bifunctional purine biosynthesis protein PurH (526 aa).

The MGS-like domain occupies 1–147 (MTKIERALIS…KNWAHVAIVT (147 aa)).

This sequence belongs to the PurH family.

It catalyses the reaction (6R)-10-formyltetrahydrofolate + 5-amino-1-(5-phospho-beta-D-ribosyl)imidazole-4-carboxamide = 5-formamido-1-(5-phospho-D-ribosyl)imidazole-4-carboxamide + (6S)-5,6,7,8-tetrahydrofolate. The enzyme catalyses IMP + H2O = 5-formamido-1-(5-phospho-D-ribosyl)imidazole-4-carboxamide. It functions in the pathway purine metabolism; IMP biosynthesis via de novo pathway; 5-formamido-1-(5-phospho-D-ribosyl)imidazole-4-carboxamide from 5-amino-1-(5-phospho-D-ribosyl)imidazole-4-carboxamide (10-formyl THF route): step 1/1. It participates in purine metabolism; IMP biosynthesis via de novo pathway; IMP from 5-formamido-1-(5-phospho-D-ribosyl)imidazole-4-carboxamide: step 1/1. This is Bifunctional purine biosynthesis protein PurH from Laribacter hongkongensis (strain HLHK9).